We begin with the raw amino-acid sequence, 185 residues long: Transcriptional repressor NrdR (185 aa).

A disordered region spans residues 1 to 24 (MRCPFCGGPDTQVKDSRPSEDSSA). The segment at 3-34 (CPFCGGPDTQVKDSRPSEDSSAIRRRRVCPDC) is a zinc-finger region. Residues 12 to 24 (QVKDSRPSEDSSA) are compositionally biased toward basic and acidic residues. The 91-residue stretch at 49–139 (LVVLKRSGKR…VYKNFREAQD (91 aa)) folds into the ATP-cone domain. The interval 149 to 185 (ERLEGEGDLPEDGEAAPAPPDEVVAAPRRGRPARKRA) is disordered. Positions 176-185 (RRGRPARKRA) are enriched in basic residues.

Belongs to the NrdR family. Zn(2+) is required as a cofactor.

In terms of biological role, negatively regulates transcription of bacterial ribonucleotide reductase nrd genes and operons by binding to NrdR-boxes. This Methylorubrum extorquens (strain PA1) (Methylobacterium extorquens) protein is Transcriptional repressor NrdR.